Here is a 500-residue protein sequence, read N- to C-terminus: Cytochrome P450 11B3, mitochondrial (500 aa).

A mitochondrion-targeting transit peptide spans 1–24; it reads MALRVTADVWLARPWQCLHRTRAL. Cys447 contacts heme.

The protein belongs to the cytochrome P450 family. It depends on heme as a cofactor. As to expression, expressed in the adrenal cortex and in different brain tissues, including hippocampus, hypothalamus, cerebellum, cerebral cortex, and midbrain.

It localises to the mitochondrion membrane. It catalyses the reaction a steroid + 2 reduced [adrenodoxin] + O2 + 2 H(+) = an 11beta-hydroxysteroid + 2 oxidized [adrenodoxin] + H2O. It carries out the reaction 21-hydroxyprogesterone + 2 reduced [adrenodoxin] + O2 + 2 H(+) = corticosterone + 2 oxidized [adrenodoxin] + H2O. The catalysed reaction is 21-hydroxyprogesterone + 2 reduced [adrenodoxin] + O2 + 2 H(+) = 18-hydroxy-11-deoxycorticosterone + 2 oxidized [adrenodoxin] + H2O. The enzyme catalyses 21-hydroxyprogesterone + 2 reduced [adrenodoxin] + O2 + 2 H(+) = 19-hydroxy-11-deoxycorticosterone + 2 oxidized [adrenodoxin] + H2O. A cytochrome P450 monooxygenase involved in the biosynthesis of adrenal corticoids. Catalyzes the hydroxylation of steroids at 11beta, 18- or 19-positions, with preferred regioselectivity at 11beta and 18. Converts 11-deoxycorticosterone into corticosterone, 18-hydroxy-11-deoxycorticosterone, and/or 19-hydroxy-11-deoxycorticosterone, but not to 18-hydroxycorticosterone or aldosterone. Mechanistically, uses molecular oxygen inserting one oxygen atom into a substrate for hydroxylation and reducing the second into a water molecule. Two electrons are provided by NADPH via a two-protein mitochondrial transfer system comprising flavoprotein FDXR (adrenodoxin/ferredoxin reductase) and nonheme iron-sulfur protein FDX1 or FDX2 (adrenodoxin/ferredoxin). This chain is Cytochrome P450 11B3, mitochondrial (Cyp11b3), found in Rattus norvegicus (Rat).